We begin with the raw amino-acid sequence, 102 residues long: NAD(P)H-quinone oxidoreductase subunit 4L (102 aa).

3 consecutive transmembrane segments (helical) span residues 4–24, 33–53, and 65–85; these read LQFF…GLIV, MSIE…SNFV, and VFVI…VLGI.

It belongs to the complex I subunit 4L family. In terms of assembly, NDH-1 can be composed of about 15 different subunits; different subcomplexes with different compositions have been identified which probably have different functions.

The protein resides in the cellular thylakoid membrane. It catalyses the reaction a plastoquinone + NADH + (n+1) H(+)(in) = a plastoquinol + NAD(+) + n H(+)(out). It carries out the reaction a plastoquinone + NADPH + (n+1) H(+)(in) = a plastoquinol + NADP(+) + n H(+)(out). In terms of biological role, NDH-1 shuttles electrons from an unknown electron donor, via FMN and iron-sulfur (Fe-S) centers, to quinones in the respiratory and/or the photosynthetic chain. The immediate electron acceptor for the enzyme in this species is believed to be plastoquinone. Couples the redox reaction to proton translocation, and thus conserves the redox energy in a proton gradient. Cyanobacterial NDH-1 also plays a role in inorganic carbon-concentration. This chain is NAD(P)H-quinone oxidoreductase subunit 4L, found in Synechococcus sp. (strain JA-3-3Ab) (Cyanobacteria bacterium Yellowstone A-Prime).